A 334-amino-acid polypeptide reads, in one-letter code: Chemotactic signal transduction system substrate-binding protein CosB (334 aa).

The N-terminal stretch at 1-29 (MMDTPEHASTSSRRQLLGMLAAGGTTAVA) is a signal peptide.

The protein belongs to the OsmX family.

It localises to the cell membrane. Functionally, mediates chemotaxis towards compatible osmolytes. May function as a receptor that binds the osmolytes and transduces a signal to CosT. Has probably no additional role in transport. This is Chemotactic signal transduction system substrate-binding protein CosB (cosB) from Halobacterium salinarum (strain ATCC 29341 / DSM 671 / R1).